Here is a 334-residue protein sequence, read N- to C-terminus: UDP-N-acetylglucosamine 4,6-dehydratase (inverting) (334 aa).

Residues 13–16 (TGSF), 37–42 (SRDELK), 61–62 (DV), Ala-81, Lys-85, and 123–124 (LS) each bind NADP(+). Lys-85 lines the substrate pocket. Lys-127 is an active-site residue. Residues Tyr-135 and Lys-139 each coordinate NADP(+). Asn-167 is a substrate binding site. 168–172 (VVGSR) provides a ligand contact to NADP(+). The substrate site is built by Val-175, Thr-193, Arg-252, and Glu-255.

The protein belongs to the polysaccharide synthase family. In terms of assembly, homohexamer. Requires NADP(+) as cofactor.

It catalyses the reaction UDP-N-acetyl-alpha-D-glucosamine = UDP-2-acetamido-2,6-dideoxy-beta-L-arabino-hex-4-ulose + H2O. In terms of biological role, catalyzes the first step in the biosynthesis of pseudaminic acid, a sialic-acid-like sugar that is used to modify flagellin. Has both C6 dehydratase and C5 epimerase activities that result in the production of both UDP-2-acetamido-2,6-dideoxy-beta-L-arabino-4-hexulose and UDP-2-acetamido-2,6-dideoxy-alpha-D-xylo-4-hexulose. The polypeptide is UDP-N-acetylglucosamine 4,6-dehydratase (inverting) (pseB) (Campylobacter jejuni subsp. jejuni serotype O:2 (strain ATCC 700819 / NCTC 11168)).